The sequence spans 64 residues: Large ribosomal subunit protein bL28 (64 aa).

Residues 1-27 (MAKRDQLTGKGPLSGNTRSHAMNHSKR) are disordered.

Belongs to the bacterial ribosomal protein bL28 family.

In Ureaplasma parvum serovar 3 (strain ATCC 27815 / 27 / NCTC 11736), this protein is Large ribosomal subunit protein bL28.